The chain runs to 451 residues: Bifunctional protein GlmU (451 aa).

A pyrophosphorylase region spans residues 1–225 (MLEIIILAAG…EYEVLGVNNR (225 aa)). Residues 7-10 (LAAG), K21, Q72, 77-78 (GT), 99-101 (YGD), G136, E150, N165, and N223 each bind UDP-N-acetyl-alpha-D-glucosamine. Position 101 (D101) interacts with Mg(2+). Mg(2+) is bound at residue N223. The interval 226-246 (LQQAELERIFQRQVAEELMVA) is linker. The interval 247–451 (GATLLDPARL…IKGWARPVKK (205 aa)) is N-acetyltransferase. 2 residues coordinate UDP-N-acetyl-alpha-D-glucosamine: R329 and K347. H359 (proton acceptor) is an active-site residue. Residues Y362 and N373 each contribute to the UDP-N-acetyl-alpha-D-glucosamine site. Residues A376, 382 to 383 (NY), S401, A419, and R436 contribute to the acetyl-CoA site.

This sequence in the N-terminal section; belongs to the N-acetylglucosamine-1-phosphate uridyltransferase family. It in the C-terminal section; belongs to the transferase hexapeptide repeat family. In terms of assembly, homotrimer. Mg(2+) is required as a cofactor.

The protein localises to the cytoplasm. It catalyses the reaction alpha-D-glucosamine 1-phosphate + acetyl-CoA = N-acetyl-alpha-D-glucosamine 1-phosphate + CoA + H(+). It carries out the reaction N-acetyl-alpha-D-glucosamine 1-phosphate + UTP + H(+) = UDP-N-acetyl-alpha-D-glucosamine + diphosphate. Its pathway is nucleotide-sugar biosynthesis; UDP-N-acetyl-alpha-D-glucosamine biosynthesis; N-acetyl-alpha-D-glucosamine 1-phosphate from alpha-D-glucosamine 6-phosphate (route II): step 2/2. The protein operates within nucleotide-sugar biosynthesis; UDP-N-acetyl-alpha-D-glucosamine biosynthesis; UDP-N-acetyl-alpha-D-glucosamine from N-acetyl-alpha-D-glucosamine 1-phosphate: step 1/1. It functions in the pathway bacterial outer membrane biogenesis; LPS lipid A biosynthesis. Functionally, catalyzes the last two sequential reactions in the de novo biosynthetic pathway for UDP-N-acetylglucosamine (UDP-GlcNAc). The C-terminal domain catalyzes the transfer of acetyl group from acetyl coenzyme A to glucosamine-1-phosphate (GlcN-1-P) to produce N-acetylglucosamine-1-phosphate (GlcNAc-1-P), which is converted into UDP-GlcNAc by the transfer of uridine 5-monophosphate (from uridine 5-triphosphate), a reaction catalyzed by the N-terminal domain. This is Bifunctional protein GlmU from Saccharophagus degradans (strain 2-40 / ATCC 43961 / DSM 17024).